The primary structure comprises 137 residues: Ribonuclease P protein component (137 aa).

It belongs to the RnpA family. In terms of assembly, consists of a catalytic RNA component (M1 or rnpB) and a protein subunit.

The enzyme catalyses Endonucleolytic cleavage of RNA, removing 5'-extranucleotides from tRNA precursor.. Functionally, RNaseP catalyzes the removal of the 5'-leader sequence from pre-tRNA to produce the mature 5'-terminus. It can also cleave other RNA substrates such as 4.5S RNA. The protein component plays an auxiliary but essential role in vivo by binding to the 5'-leader sequence and broadening the substrate specificity of the ribozyme. The chain is Ribonuclease P protein component from Porphyromonas gingivalis (strain ATCC BAA-308 / W83).